A 466-amino-acid polypeptide reads, in one-letter code: Ribulose bisphosphate carboxylase large chain (466 aa).

Position 4 is an N6,N6,N6-trimethyllysine (K4). Substrate contacts are provided by N113 and T163. Catalysis depends on K165, which acts as the Proton acceptor. K167 contacts substrate. Positions 191, 193, and 194 each coordinate Mg(2+). K191 is subject to N6-carboxylysine. Residue H284 is the Proton acceptor of the active site. R285, H317, and S369 together coordinate substrate.

It belongs to the RuBisCO large chain family. Type I subfamily. As to quaternary structure, heterohexadecamer of 8 large chains and 8 small chains; disulfide-linked. The disulfide link is formed within the large subunit homodimers. Mg(2+) is required as a cofactor. The disulfide bond which can form in the large chain dimeric partners within the hexadecamer appears to be associated with oxidative stress and protein turnover.

It localises to the plastid. Its subcellular location is the chloroplast. The enzyme catalyses 2 (2R)-3-phosphoglycerate + 2 H(+) = D-ribulose 1,5-bisphosphate + CO2 + H2O. It carries out the reaction D-ribulose 1,5-bisphosphate + O2 = 2-phosphoglycolate + (2R)-3-phosphoglycerate + 2 H(+). Functionally, ruBisCO catalyzes two reactions: the carboxylation of D-ribulose 1,5-bisphosphate, the primary event in carbon dioxide fixation, as well as the oxidative fragmentation of the pentose substrate in the photorespiration process. Both reactions occur simultaneously and in competition at the same active site. This chain is Ribulose bisphosphate carboxylase large chain, found in Nelsonia canescens (Blue pussyleaf).